Here is a 156-residue protein sequence, read N- to C-terminus: Ribonuclease pancreatic (156 aa).

An N-terminal signal peptide occupies residues 1 to 28 (MALEKSLALLPLLVLVLLVLGWVQPSLG). Positions 33-43 (AQKFQRQHMDS) are enriched in basic and acidic residues. A disordered region spans residues 33–52 (AQKFQRQHMDSDGSPSSNPT). 2 residues coordinate substrate: K35 and R38. H40 (proton acceptor) is an active-site residue. 4 disulfide bridges follow: C54–C112, C68–C123, C86–C138, and C93–C100. N62 is a glycosylation site (N-linked (GlcNAc...) asparagine). Residues 69-73 (KPVNT), K94, and R113 contribute to the substrate site. N116 carries an N-linked (GlcNAc...) asparagine glycan. Catalysis depends on H147, which acts as the Proton donor.

Belongs to the pancreatic ribonuclease family. Monomer. Interacts with and forms tight 1:1 complexes with RNH1. Dimerization of two such complexes may occur. Interaction with RNH1 inhibits this protein.

The protein localises to the secreted. The catalysed reaction is an [RNA] containing cytidine + H2O = an [RNA]-3'-cytidine-3'-phosphate + a 5'-hydroxy-ribonucleotide-3'-[RNA].. It catalyses the reaction an [RNA] containing uridine + H2O = an [RNA]-3'-uridine-3'-phosphate + a 5'-hydroxy-ribonucleotide-3'-[RNA].. Its function is as follows. Endonuclease that catalyzes the cleavage of RNA on the 3' side of pyrimidine nucleotides. Acts on single-stranded and double-stranded RNA. This Saguinus oedipus (Cotton-top tamarin) protein is Ribonuclease pancreatic (RNASE1).